The primary structure comprises 689 residues: MSNKQIFLKFKSGEIILNNFNKYTDSISSKLLFYQNIKNQENNSGNENYKNFNYNYKNKNNYNNNNNNNNSNSSSNNNGSNNNIKFNSLFISSIYLYNNNNSNNNDLKNDKNDNSIGNINKIIKPKIEIQDLLNPFEAIKEIVGNKEDEEINLVKIGIRVLELGLILLPSVLTFPCCFIPGVKELWWQLLLETIQFSGTCWIKFGQWISTRPDLFPDLLIEKFSQLHSQCPSHSFQFTNESIENSFNGKSIKDLFLWFDEEPMASGSVAQVHKALTMDGKVAVVKVLHPNVKSNIKRDFFIIYSLIWAFSHIPEMKWLSLPESILEFGKSMMKQADLELEASHLNRFNSNFKYNSEVIFPKPLYPLVSKEVLVESFEPGSPIMDFIKKNDHHNPTLAKIGLSAYMQMMLVDNFVHADLHPGNVLVRTSDDDNFKSIDNNYFKKYNNDNDQQQQQQYNLPFKRKLYDTIEKSHKKFDSMLGGIQLKSIDFKEHQKSSPKLIFLDVGLVTQLGQQDKDHFIELFTEIVNGNGKEGAELLIRYAREAKCTEEEMYQFKERMGTLFNQVQNSKLSEVHVGQFMSEILGLVREYHVKIESNFATLVMGTIVLEGLGKQLDPSLGLLKAAIPFLLKSQVFSFSNFIKDFFLKSKTSKKQLNNDNNNNNNNNNNNKNNNDNNNKNNNNKNNNEKNK.

The interval Asn-42 to Gly-79 is disordered. Residues Trp-257–Lys-689 form the Protein kinase domain. Residues Met-263–Val-271 and Lys-285 contribute to the ATP site. Asp-417 (proton acceptor) is an active-site residue. The tract at residues Lys-652–Lys-689 is disordered. Residues Asn-655–Asn-683 are compositionally biased toward low complexity.

The protein belongs to the protein kinase superfamily. ADCK protein kinase family.

The polypeptide is Probable serine/threonine-protein kinase abkC (abkC) (Dictyostelium discoideum (Social amoeba)).